The primary structure comprises 431 residues: MVSLEKNDRLMLARQLPLKSVALILAGGRGTRLKDLTNKRAKPAVHFGGKFRIIDFALSNCLNSGIRRIGVITQYQSHTLVQHIQRGWSLFSEEMNEFVDLLPAQQRMQGENWYRGTADAVTQNLDIIRRYKAEYVVILAGDHIYKQDYSRMLIDHVEKGARCTVACMPVPIKEATAFGVMAVDESEKIIDFVEKPANPPAMPGDDSKALASMGIYVFDADYLYELLAADDKDDASSHDFGKDIIPKITREGMAYAHPFPLSCVQSDPDAEPYWRDVGTLEAYWKANLDLASVTPELDMYDQNWPIRTHMESLPPAKFVQDRSGSHGMTLNSLVSGGCIISGSVVVQSVLFPRVRINSFCNIDSAVLLPEVWVGRSCRLRRCIIDRACIIPEGMVIGENAEEDARRFYRSEEGIVLVTREMLRKLQVKQER.

Lysine 39 contacts beta-D-fructose 1,6-bisphosphate. Positions 40, 46, and 52 each coordinate AMP. An alpha-D-glucose 1-phosphate-binding site is contributed by tyrosine 114. Arginine 130 is a binding site for AMP. Alpha-D-glucose 1-phosphate contacts are provided by residues glycine 179, 194–195, and serine 212; that span reads EK. AMP contacts are provided by glutamate 370 and arginine 386. Residues 419–423 and 429–431 contribute to the beta-D-fructose 1,6-bisphosphate site; these read REMLR and QER.

Belongs to the bacterial/plant glucose-1-phosphate adenylyltransferase family. As to quaternary structure, homotetramer.

It catalyses the reaction alpha-D-glucose 1-phosphate + ATP + H(+) = ADP-alpha-D-glucose + diphosphate. Its pathway is glycan biosynthesis; glycogen biosynthesis. With respect to regulation, allosterically activated by fructose-1,6-bisphosphate (F16BP) and inhibited by AMP. Functionally, involved in the biosynthesis of ADP-glucose, a building block required for the elongation reactions to produce glycogen. Catalyzes the reaction between ATP and alpha-D-glucose 1-phosphate (G1P) to produce pyrophosphate and ADP-Glc. In Salmonella arizonae (strain ATCC BAA-731 / CDC346-86 / RSK2980), this protein is Glucose-1-phosphate adenylyltransferase.